The chain runs to 181 residues: Histone H1 (181 aa).

Disordered stretches follow at residues 1–23 (MTET…THPP) and 81–181 (TKGA…PKKK). Residues 8–19 (KPKKVSKPKAKP) are compositionally biased toward basic residues. The H15 domain occupies 20–94 (THPPTSVMVM…GASGSFKLAA (75 aa)). Composition is skewed to basic residues over residues 103–119 (AVAK…KAAA) and 145–181 (KPKK…PKKK).

It belongs to the histone H1/H5 family.

It is found in the nucleus. It localises to the chromosome. Functionally, histones H1 are necessary for the condensation of nucleosome chains into higher-order structures. The protein is Histone H1 of Tigriopus californicus (Marine copepod).